The primary structure comprises 156 residues: SsrA-binding protein (156 aa).

The disordered stretch occupies residues 134–156 (RQTLREQQDKRESLRELRERNRR).

It belongs to the SmpB family.

Its subcellular location is the cytoplasm. Its function is as follows. Required for rescue of stalled ribosomes mediated by trans-translation. Binds to transfer-messenger RNA (tmRNA), required for stable association of tmRNA with ribosomes. tmRNA and SmpB together mimic tRNA shape, replacing the anticodon stem-loop with SmpB. tmRNA is encoded by the ssrA gene; the 2 termini fold to resemble tRNA(Ala) and it encodes a 'tag peptide', a short internal open reading frame. During trans-translation Ala-aminoacylated tmRNA acts like a tRNA, entering the A-site of stalled ribosomes, displacing the stalled mRNA. The ribosome then switches to translate the ORF on the tmRNA; the nascent peptide is terminated with the 'tag peptide' encoded by the tmRNA and targeted for degradation. The ribosome is freed to recommence translation, which seems to be the essential function of trans-translation. This is SsrA-binding protein from Paenarthrobacter aurescens (strain TC1).